A 134-amino-acid polypeptide reads, in one-letter code: Probable glycine cleavage system H protein (134 aa).

The region spanning 29 to 110 (TVLVGITDYA…PYENWIAKLK (82 aa)) is the Lipoyl-binding domain. Lysine 70 is modified (N6-lipoyllysine).

The protein belongs to the GcvH family. As to quaternary structure, the glycine cleavage system is composed of four proteins: P, T, L and H. (R)-lipoate serves as cofactor.

In terms of biological role, the glycine cleavage system catalyzes the degradation of glycine. The H protein shuttles the methylamine group of glycine from the P protein to the T protein. The sequence is that of Probable glycine cleavage system H protein from Thermococcus gammatolerans (strain DSM 15229 / JCM 11827 / EJ3).